The chain runs to 171 residues: METFEDGQLGVLTRPIRGYRAIDCYSQKIYRESKQKNWIRAISTLRVDTGSTVLMIKGPNNSNLFNTSQVYVENIEDFRGNPISDDFECQSSAMAYPIKNFYNKDKKQLDIGIDFFEDWTFDVQVTFYYKHIYKKNQFIKSPLTKTNNYSIMNLDGFYLFLDKSQAMTSDI.

This sequence belongs to the mimivirus L87/L94 family.

This is an uncharacterized protein from Acanthamoeba polyphaga (Amoeba).